Here is a 542-residue protein sequence, read N- to C-terminus: Putative sodium-dependent excitatory amino acid transporter glt-6 (542 aa).

Over 1-15 (MKSKRRDDIVQFCRE) the chain is Cytoplasmic. 3 helical membrane-spanning segments follow: residues 16–36 (NTLL…GFGL), 55–75 (IFMQ…LISA), and 93–113 (LYYL…VTVI). Residues 114–191 (HPGDPSIKGT…IVKRSIGMTK (78 aa)) lie on the Extracellular side of the membrane. A glycan (N-linked (GlcNAc...) asparagine) is linked at Asn175. The next 5 helical transmembrane spans lie at 192–212 (GMNI…ISQL), 234–254 (VVTL…GNLL), 265–285 (VLAL…IITV), 303–323 (GMIQ…TLPM), and 386–406 (TIAS…LLIL). The segment covering 505-517 (RIGSRIGSRRPSS) has biased composition (low complexity). The segment at 505-542 (RIGSRIGSRRPSSTNLHLSWRNNNIEPPYTPLPNDENV) is disordered. The span at 518-529 (TNLHLSWRNNNI) shows a compositional bias: polar residues.

This sequence belongs to the dicarboxylate/amino acid:cation symporter (DAACS) (TC 2.A.23) family.

It localises to the membrane. The sequence is that of Putative sodium-dependent excitatory amino acid transporter glt-6 (glt-6) from Caenorhabditis elegans.